Reading from the N-terminus, the 134-residue chain is Small ribosomal subunit protein bS16 (134 aa).

The tract at residues 81 to 134 (LAKRPARSNPKKAEPGKKAQERLAAARQAEEEAKAAAEAAAAAPAEAPAEEAAS) is disordered. Positions 91-101 (KKAEPGKKAQE) are enriched in basic and acidic residues. Residues 116 to 134 (AAEAAAAAPAEAPAEEAAS) show a composition bias toward low complexity.

This sequence belongs to the bacterial ribosomal protein bS16 family.

This chain is Small ribosomal subunit protein bS16, found in Chelativorans sp. (strain BNC1).